A 1223-amino-acid polypeptide reads, in one-letter code: Kinesin-like protein costa (1223 aa).

The Kinesin motor domain occupies 4 to 394 (PIQVAVRICP…LQFAFKVQCV (391 aa)). Residues 13 to 90 (PYTEPSENRK…LPTDSNGNEN (78 aa)) are disordered. Basic and acidic residues predominate over residues 39-62 (AKAESFSDSEDNKNDASNRQRPEE). 178–185 (GQRGQGKT) is a binding site for ATP. Disordered stretches follow at residues 494-528 (RSQK…ESQR), 560-604 (KHPK…SIQP), and 625-646 (TAQP…ESSA). Basic and acidic residues predominate over residues 569–593 (QERDKESKLDAPPEKDKEKIEERKT). 3 coiled-coil regions span residues 658 to 743 (AAAN…QGRE), 773 to 825 (ESGQ…GASG), and 982 to 1015 (NKVI…ERVL). The segment at 774–799 (SGQKLKKLQQSMAESRKQQEELEKKI) is disordered. Positions 787-799 (ESRKQQEELEKKI) are enriched in basic and acidic residues. Residues 1162-1178 (TTTATATTTTTTTTTTT) show a composition bias toward low complexity. The segment at 1162–1188 (TTTATATTTTTTTTTTTGGKGKERGLP) is disordered.

This sequence belongs to the TRAFAC class myosin-kinesin ATPase superfamily. Kinesin family. KIF27 subfamily. In terms of assembly, homodimer (Potential). Binds microtubules. Interacts with ci, smo, sgg, CkIalpha and protein kinase A catalytic subunit.

It localises to the cytoplasm. The protein resides in the cytoskeleton. In terms of biological role, regulates cubitus interruptus (ci) processing by recruiting multiple kinases to promote its efficient phosphorylation. Scaffolds multiple kinases and ci into proximity to promote its hyperphosphorylation, which then targets it for SCFSlimb/proteasome-mediated processing to generate its repressor form. Hh signaling inhibits ci phosphorylation by interfering with the cos-ci-kinases complex formation. In Drosophila pseudoobscura pseudoobscura (Fruit fly), this protein is Kinesin-like protein costa (cos).